A 320-amino-acid chain; its full sequence is Protein LATERAL ROOT PRIMORDIUM 1 (320 aa).

The disordered stretch occupies residues 90-110 (QTTVGTSSNNSGSGSGASGTA). Positions 112, 115, 123, 128, 132, and 139 each coordinate Zn(2+). The zn(2)-C6 fungal-type; degenerate DNA-binding region spans 112–139 (CQDCGNQAKKECKQRRCRTCCKSRGFDC). Positions 150–223 (AARRRERQVM…QDGGGSREAW (74 aa)) are disordered. A compositionally biased stretch (low complexity) spans 168 to 177 (GSSLSTSSGT). Residues 193 to 214 (ATSHTSTSNTPPQSFETSSSRQ) show a composition bias toward polar residues. Positions 256–259 (IGGH) match the Required for homo- and heterodimerization motif.

It belongs to the SHI protein family. As to quaternary structure, homodimer. As to expression, restricted to lateral root primordia.

The protein resides in the nucleus. In terms of biological role, transcription activator that binds DNA on 5'-ACTCTAC-3' and promotes auxin homeostasis-regulating gene expression (e.g. YUC genes), as well as genes affecting stamen development, cell expansion and timing of flowering. Synergistically with other SHI-related proteins, regulates gynoecium, stamen and leaf development in a dose-dependent manner, controlling apical-basal patterning. Promotes style and stigma formation, and influence vascular development during gynoecium development. May also have a role in the formation and/or maintenance of the shoot apical meristem (SAM). Modulates root growth. The protein is Protein LATERAL ROOT PRIMORDIUM 1 (LRP1) of Arabidopsis thaliana (Mouse-ear cress).